The following is a 385-amino-acid chain: S-adenosylmethionine synthase (385 aa).

Histidine 14 is a binding site for ATP. Aspartate 16 lines the Mg(2+) pocket. A K(+)-binding site is contributed by glutamate 42. 2 residues coordinate L-methionine: glutamate 55 and glutamine 98. The interval 98-108 is flexible loop; that stretch reads QSGDIAQAVDN. ATP contacts are provided by residues 165-167, 232-233, aspartate 241, 247-248, alanine 264, and lysine 268; these read DAK, RF, and RK. Position 241 (aspartate 241) interacts with L-methionine. Residue lysine 272 coordinates L-methionine.

Belongs to the AdoMet synthase family. Homotetramer; dimer of dimers. The cofactor is Mg(2+). K(+) is required as a cofactor.

Its subcellular location is the cytoplasm. It catalyses the reaction L-methionine + ATP + H2O = S-adenosyl-L-methionine + phosphate + diphosphate. It functions in the pathway amino-acid biosynthesis; S-adenosyl-L-methionine biosynthesis; S-adenosyl-L-methionine from L-methionine: step 1/1. Functionally, catalyzes the formation of S-adenosylmethionine (AdoMet) from methionine and ATP. The overall synthetic reaction is composed of two sequential steps, AdoMet formation and the subsequent tripolyphosphate hydrolysis which occurs prior to release of AdoMet from the enzyme. This Leuconostoc mesenteroides subsp. mesenteroides (strain ATCC 8293 / DSM 20343 / BCRC 11652 / CCM 1803 / JCM 6124 / NCDO 523 / NBRC 100496 / NCIMB 8023 / NCTC 12954 / NRRL B-1118 / 37Y) protein is S-adenosylmethionine synthase.